A 389-amino-acid polypeptide reads, in one-letter code: Sulfate adenylyltransferase (389 aa).

It belongs to the sulfate adenylyltransferase family.

The enzyme catalyses sulfate + ATP + H(+) = adenosine 5'-phosphosulfate + diphosphate. It functions in the pathway sulfur metabolism; hydrogen sulfide biosynthesis; sulfite from sulfate: step 1/3. The chain is Sulfate adenylyltransferase from Hyperthermus butylicus (strain DSM 5456 / JCM 9403 / PLM1-5).